A 164-amino-acid polypeptide reads, in one-letter code: MTCQTYNLFVLSVIMIYYGHTASSLNLVQLQDDIDKLKADFNSSHSDVADGGPIIVEKLKNWTERNEKRIILSQIVSMYLEMLENTDKSKPHIKHISEELYTLKNNLNDGTKKVKDIMDLAKLQMNDLRIHRKAANDLFSVLQKLVDPPSSKRKRSQCLRRCSC.

Residues 1-19 form the signal peptide; it reads MTCQTYNLFVLSVIMIYYG. N-linked (GlcNAc...) asparagine glycans are attached at residues Asn42 and Asn61.

Belongs to the type II (or gamma) interferon family. In terms of assembly, homodimer.

It localises to the secreted. In terms of biological role, produced by lymphocytes activated by specific antigens or mitogens. IFN-gamma, in addition to having antiviral activity, has important immunoregulatory functions. It is a potent activator of macrophages, it has antiproliferative effects on transformed cells and it can potentiate the antiviral and antitumor effects of the type I interferons. The chain is Interferon gamma (IFNG) from Coturnix japonica (Japanese quail).